Consider the following 472-residue polypeptide: Cysteine--tRNA ligase (472 aa).

Cys-29 contacts Zn(2+). Positions 31–41 match the 'HIGH' region motif; sequence ITVYDYCHLGH. Positions 214, 239, and 243 each coordinate Zn(2+). The short motif at 271–275 is the 'KMSKS' region element; the sequence is KMSKS. ATP is bound at residue Lys-274.

The protein belongs to the class-I aminoacyl-tRNA synthetase family. As to quaternary structure, monomer. Zn(2+) serves as cofactor.

It is found in the cytoplasm. It catalyses the reaction tRNA(Cys) + L-cysteine + ATP = L-cysteinyl-tRNA(Cys) + AMP + diphosphate. The protein is Cysteine--tRNA ligase of Picosynechococcus sp. (strain ATCC 27264 / PCC 7002 / PR-6) (Agmenellum quadruplicatum).